Here is a 574-residue protein sequence, read N- to C-terminus: Developmental and secondary metabolism regulator veA (574 aa).

4 disordered regions span residues methionine 1–threonine 22, glutamate 39–proline 60, arginine 255–lysine 500, and arginine 513–phenylalanine 548. A Velvet domain is found at glycine 25–arginine 230. The Nuclear localization signal signature appears at glutamate 39–cysteine 44. Pro residues-rich tracts occupy residues arginine 314–alanine 323 and proline 330–histidine 341. 4 stretches are compositionally biased toward polar residues: residues proline 343–proline 359, histidine 385–glutamate 394, tyrosine 402–proline 415, and valine 448–threonine 458. The segment at glutamine 457–lysine 501 is PEST. Composition is skewed to low complexity over residues proline 459–serine 474 and serine 482–serine 493. Basic and acidic residues-rich tracts occupy residues arginine 513–proline 525 and proline 532–aspartate 543.

Belongs to the velvet family. VeA subfamily. In terms of assembly, component of the heterotrimeric velvet complex composed of laeA, veA and velB; VeA acting as a bridging protein between laeA and velB.

Its subcellular location is the nucleus. The protein resides in the cytoplasm. Component of the velvet transcription factor complex that controls sexual/asexual developmental ratio in response to light, promoting sexual development in the darkness while stimulating asexual sporulation under illumination. The velvet complex hat acts as a global regulator for secondary metabolite gene expression. Controls the expression of the aflatoxin gene cluster. Required for the expression of aflR and aflJ. Mediates the coordination of aflatoxigenic vesicles (aflatoxisomes) development with aflatoxin gene expression. Regulates branched chain amino acid and ethanol metabolism and acts as a positive regulator of mitochondrial and peroxisomal beta-oxidation. This is Developmental and secondary metabolism regulator veA from Aspergillus parasiticus.